Consider the following 157-residue polypeptide: uncharacterized protein (157 aa).

The N-acetyltransferase domain maps to 9–154 (LLINYKTLDE…ETNLNAVTNE (146 aa)).

This is an uncharacterized protein from Bacillus cereus (strain B4264).